The following is a 312-amino-acid chain: Glyoxylate/hydroxypyruvate reductase A (312 aa).

Arginine 227 is an active-site residue. Histidine 275 serves as the catalytic Proton donor.

This sequence belongs to the D-isomer specific 2-hydroxyacid dehydrogenase family. GhrA subfamily.

Its subcellular location is the cytoplasm. The enzyme catalyses glycolate + NADP(+) = glyoxylate + NADPH + H(+). The catalysed reaction is (R)-glycerate + NAD(+) = 3-hydroxypyruvate + NADH + H(+). It catalyses the reaction (R)-glycerate + NADP(+) = 3-hydroxypyruvate + NADPH + H(+). Functionally, catalyzes the NADPH-dependent reduction of glyoxylate and hydroxypyruvate into glycolate and glycerate, respectively. The sequence is that of Glyoxylate/hydroxypyruvate reductase A from Escherichia coli O81 (strain ED1a).